Here is a 238-residue protein sequence, read N- to C-terminus: Ribonuclease PH (238 aa).

Phosphate contacts are provided by residues Arg87 and 125–127; that span reads GTR.

This sequence belongs to the RNase PH family. As to quaternary structure, homohexameric ring arranged as a trimer of dimers.

The catalysed reaction is tRNA(n+1) + phosphate = tRNA(n) + a ribonucleoside 5'-diphosphate. Its function is as follows. Phosphorolytic 3'-5' exoribonuclease that plays an important role in tRNA 3'-end maturation. Removes nucleotide residues following the 3'-CCA terminus of tRNAs; can also add nucleotides to the ends of RNA molecules by using nucleoside diphosphates as substrates, but this may not be physiologically important. Probably plays a role in initiation of 16S rRNA degradation (leading to ribosome degradation) during starvation. In Synechococcus elongatus (strain ATCC 33912 / PCC 7942 / FACHB-805) (Anacystis nidulans R2), this protein is Ribonuclease PH.